Consider the following 146-residue polypeptide: Cyanate hydratase (146 aa).

Active-site residues include R87, E90, and S113.

This sequence belongs to the cyanase family.

The catalysed reaction is cyanate + hydrogencarbonate + 3 H(+) = NH4(+) + 2 CO2. In terms of biological role, catalyzes the reaction of cyanate with bicarbonate to produce ammonia and carbon dioxide. This is Cyanate hydratase from Trichormus variabilis (strain ATCC 29413 / PCC 7937) (Anabaena variabilis).